A 337-amino-acid chain; its full sequence is Tryptophan--tRNA ligase (337 aa).

ATP-binding positions include 11–13 (QPT) and 19–20 (GN). The 'HIGH' region signature appears at 12–20 (PTGALHLGN). Asp135 provides a ligand contact to L-tryptophan. ATP contacts are provided by residues 147–149 (GED), Val191, and 200–204 (KMSKS). The short motif at 200 to 204 (KMSKS) is the 'KMSKS' region element.

Belongs to the class-I aminoacyl-tRNA synthetase family. Homodimer.

The protein resides in the cytoplasm. The enzyme catalyses tRNA(Trp) + L-tryptophan + ATP = L-tryptophyl-tRNA(Trp) + AMP + diphosphate + H(+). Functionally, catalyzes the attachment of tryptophan to tRNA(Trp). The protein is Tryptophan--tRNA ligase of Parasynechococcus marenigrum (strain WH8102).